The sequence spans 219 residues: Deoxyribose-phosphate aldolase (219 aa).

Asp93 (proton donor/acceptor) is an active-site residue. The active-site Schiff-base intermediate with acetaldehyde is Lys154. The Proton donor/acceptor role is filled by Lys179.

This sequence belongs to the DeoC/FbaB aldolase family. DeoC type 1 subfamily.

Its subcellular location is the cytoplasm. It carries out the reaction 2-deoxy-D-ribose 5-phosphate = D-glyceraldehyde 3-phosphate + acetaldehyde. It functions in the pathway carbohydrate degradation; 2-deoxy-D-ribose 1-phosphate degradation; D-glyceraldehyde 3-phosphate and acetaldehyde from 2-deoxy-alpha-D-ribose 1-phosphate: step 2/2. Its function is as follows. Catalyzes a reversible aldol reaction between acetaldehyde and D-glyceraldehyde 3-phosphate to generate 2-deoxy-D-ribose 5-phosphate. This Haloquadratum walsbyi (strain DSM 16790 / HBSQ001) protein is Deoxyribose-phosphate aldolase.